Here is a 149-residue protein sequence, read N- to C-terminus: Arginine repressor (149 aa).

It belongs to the ArgR family.

It localises to the cytoplasm. It functions in the pathway amino-acid biosynthesis; L-arginine biosynthesis [regulation]. In terms of biological role, regulates arginine biosynthesis genes. The protein is Arginine repressor of Oceanobacillus iheyensis (strain DSM 14371 / CIP 107618 / JCM 11309 / KCTC 3954 / HTE831).